The following is a 180-amino-acid chain: UPF0340 protein RBAM_034070 (180 aa).

Belongs to the UPF0340 family.

In Bacillus velezensis (strain DSM 23117 / BGSC 10A6 / LMG 26770 / FZB42) (Bacillus amyloliquefaciens subsp. plantarum), this protein is UPF0340 protein RBAM_034070.